Reading from the N-terminus, the 163-residue chain is uncharacterized protein (163 aa).

A disordered region spans residues 23–113 (DFPEEPPLWV…QVADGVHSQQ (91 aa)). A Phosphoserine modification is found at serine 102.

This is an uncharacterized protein from Mus musculus (Mouse).